The following is a 100-amino-acid chain: Urease subunit gamma (100 aa).

The protein belongs to the urease gamma subunit family. In terms of assembly, heterotrimer of UreA (gamma), UreB (beta) and UreC (alpha) subunits. Three heterotrimers associate to form the active enzyme.

The protein resides in the cytoplasm. It catalyses the reaction urea + 2 H2O + H(+) = hydrogencarbonate + 2 NH4(+). Its pathway is nitrogen metabolism; urea degradation; CO(2) and NH(3) from urea (urease route): step 1/1. This chain is Urease subunit gamma, found in Magnetococcus marinus (strain ATCC BAA-1437 / JCM 17883 / MC-1).